A 353-amino-acid polypeptide reads, in one-letter code: Inactive ubiquitin thioesterase OTULINL (353 aa).

Residues 1–80 form a required for membrane binding region; the sequence is MKATRSAPRE…KWWIGYLQRK (80 aa). The region spanning 125-353 is the OTU domain; it reads KCVRPVKRDN…NDHQYHIPVF (229 aa).

This sequence belongs to the peptidase C65 family. Otulin subfamily. In terms of assembly, does not bind ubiquitin or ubiquitin-like proteins.

Its subcellular location is the cytoplasm. It is found in the endoplasmic reticulum membrane. The protein localises to the nucleus envelope. Functionally, lacks deubiquitinase activity. This is Inactive ubiquitin thioesterase OTULINL from Rattus norvegicus (Rat).